A 466-amino-acid polypeptide reads, in one-letter code: Glutamate-1-semialdehyde 2,1-aminomutase (466 aa).

Lysine 292 bears the N6-(pyridoxal phosphate)lysine mark.

It belongs to the class-III pyridoxal-phosphate-dependent aminotransferase family. HemL subfamily. Homodimer. Pyridoxal 5'-phosphate serves as cofactor.

It is found in the cytoplasm. The enzyme catalyses (S)-4-amino-5-oxopentanoate = 5-aminolevulinate. It functions in the pathway porphyrin-containing compound metabolism; protoporphyrin-IX biosynthesis; 5-aminolevulinate from L-glutamyl-tRNA(Glu): step 2/2. In Tropheryma whipplei (strain TW08/27) (Whipple's bacillus), this protein is Glutamate-1-semialdehyde 2,1-aminomutase.